A 347-amino-acid polypeptide reads, in one-letter code: D-alanine--D-alanine ligase (347 aa).

The region spanning 134 to 332 (KLYAKDLGVK…LAQSLPKTPK (199 aa)) is the ATP-grasp domain. Position 161–216 (161–216 (LIGFNFPFIVKPSNAGSSLGVNVVKEEKELIYALDSAFEYSKEVLIEPFIQGVKEY)) interacts with ATP. 3 residues coordinate Mg(2+): D288, E300, and N302.

Belongs to the D-alanine--D-alanine ligase family. Requires Mg(2+) as cofactor. The cofactor is Mn(2+).

It is found in the cytoplasm. The catalysed reaction is 2 D-alanine + ATP = D-alanyl-D-alanine + ADP + phosphate + H(+). It participates in cell wall biogenesis; peptidoglycan biosynthesis. Its function is as follows. Cell wall formation. This chain is D-alanine--D-alanine ligase, found in Helicobacter pylori (strain J99 / ATCC 700824) (Campylobacter pylori J99).